The sequence spans 415 residues: Imidazolonepropionase (415 aa).

Residues histidine 76 and histidine 78 each contribute to the Fe(3+) site. Positions 76 and 78 each coordinate Zn(2+). Residues arginine 85, tyrosine 148, and histidine 181 each contribute to the 4-imidazolone-5-propanoate site. Position 148 (tyrosine 148) interacts with N-formimidoyl-L-glutamate. Histidine 246 is a binding site for Fe(3+). Residue histidine 246 participates in Zn(2+) binding. Glutamate 249 provides a ligand contact to 4-imidazolone-5-propanoate. Residue aspartate 320 coordinates Fe(3+). Aspartate 320 contacts Zn(2+). N-formimidoyl-L-glutamate contacts are provided by asparagine 322 and glycine 324. Residue threonine 325 participates in 4-imidazolone-5-propanoate binding.

Belongs to the metallo-dependent hydrolases superfamily. HutI family. Zn(2+) serves as cofactor. Fe(3+) is required as a cofactor.

The protein resides in the cytoplasm. It catalyses the reaction 4-imidazolone-5-propanoate + H2O = N-formimidoyl-L-glutamate. The protein operates within amino-acid degradation; L-histidine degradation into L-glutamate; N-formimidoyl-L-glutamate from L-histidine: step 3/3. Functionally, catalyzes the hydrolytic cleavage of the carbon-nitrogen bond in imidazolone-5-propanoate to yield N-formimidoyl-L-glutamate. It is the third step in the universal histidine degradation pathway. This chain is Imidazolonepropionase, found in Caldanaerobacter subterraneus subsp. tengcongensis (strain DSM 15242 / JCM 11007 / NBRC 100824 / MB4) (Thermoanaerobacter tengcongensis).